Reading from the N-terminus, the 580-residue chain is CDKN2A-interacting protein (580 aa).

An N-acetylalanine modification is found at alanine 2. The XRN2-binding (XTBD) domain maps to 19–133; it reads VEALRCDGET…KVKKRGISSS (115 aa). Positions 129 to 356 are disordered; the sequence is GISSSNEGVE…PKSSSSTNTS (228 aa). Position 131 is a phosphoserine (serine 131). Residues 155 to 167 show a composition bias toward basic and acidic residues; sequence EQDHAKTSAKTER. Over residues 168-179 the composition is skewed to polar residues; that stretch reads ASAQQENSSTCI. A Glycyl lysine isopeptide (Lys-Gly) (interchain with G-Cter in SUMO1) cross-link involves residue lysine 184. A compositionally biased stretch (low complexity) spans 185 to 228; sequence SESGNSARSSGISSQNSSTSDGDRSVSSQSSSSVSSQVTTAGSG. Positions 231 to 240 are enriched in basic and acidic residues; sequence SEAEAPDKHG. A Phosphoserine modification is found at serine 241. The segment covering 248–269 has biased composition (polar residues); it reads LKSSVNSHMTQSTDSRQQSGSP. 2 stretches are compositionally biased toward low complexity: residues 274–313 and 321–356; these read LEGSSASASQSSSEIEVPLLGSSGSSEVELPLLSSKPSSE and SKTSSEASVSSSVAKNSSSSGTSLLTPKSSSSTNTS. A Phosphothreonine modification is found at threonine 346. Serine 389 is subject to Phosphoserine. One can recognise a DRBM domain in the interval 462–537; that stretch reads NHGELLNAAI…SREALKLFLK (76 aa).

The protein belongs to the CARF family. As to quaternary structure, interacts with CDKN2A/p14ARF, p53/TP53 and MDM2. Interacts with CHEK2 and MAPK3. Interacts with XRN2. May be ubiquitinated. As to expression, ubiquitously expressed.

It localises to the nucleus. The protein resides in the nucleoplasm. Regulates DNA damage response in a dose-dependent manner through a number of signaling pathways involved in cell proliferation, apoptosis and senescence. The protein is CDKN2A-interacting protein (CDKN2AIP) of Homo sapiens (Human).